We begin with the raw amino-acid sequence, 500 residues long: Cytochrome P450 2D27 (500 aa).

Cysteine 446 contacts heme.

This sequence belongs to the cytochrome P450 family. Heme serves as cofactor. Expressed in liver, but not in kidney, small intestine, and brain.

Its subcellular location is the endoplasmic reticulum membrane. The protein resides in the microsome membrane. Functionally, has bufuralol 1'-hydroxylase and debrisoquine 4-hydroxylase activities. In Mesocricetus auratus (Golden hamster), this protein is Cytochrome P450 2D27 (CYP2D27).